Here is a 564-residue protein sequence, read N- to C-terminus: Dihydroxy-acid dehydratase (564 aa).

Residue cysteine 53 coordinates [2Fe-2S] cluster. Aspartate 85 contributes to the Mg(2+) binding site. [2Fe-2S] cluster is bound at residue cysteine 126. Positions 127 and 128 each coordinate Mg(2+). An N6-carboxylysine modification is found at lysine 128. A [2Fe-2S] cluster-binding site is contributed by cysteine 203. Glutamate 454 serves as a coordination point for Mg(2+). Catalysis depends on serine 480, which acts as the Proton acceptor.

Belongs to the IlvD/Edd family. As to quaternary structure, homodimer. The cofactor is [2Fe-2S] cluster. It depends on Mg(2+) as a cofactor.

The enzyme catalyses (2R)-2,3-dihydroxy-3-methylbutanoate = 3-methyl-2-oxobutanoate + H2O. It carries out the reaction (2R,3R)-2,3-dihydroxy-3-methylpentanoate = (S)-3-methyl-2-oxopentanoate + H2O. It functions in the pathway amino-acid biosynthesis; L-isoleucine biosynthesis; L-isoleucine from 2-oxobutanoate: step 3/4. The protein operates within amino-acid biosynthesis; L-valine biosynthesis; L-valine from pyruvate: step 3/4. Its function is as follows. Functions in the biosynthesis of branched-chain amino acids. Catalyzes the dehydration of (2R,3R)-2,3-dihydroxy-3-methylpentanoate (2,3-dihydroxy-3-methylvalerate) into 2-oxo-3-methylpentanoate (2-oxo-3-methylvalerate) and of (2R)-2,3-dihydroxy-3-methylbutanoate (2,3-dihydroxyisovalerate) into 2-oxo-3-methylbutanoate (2-oxoisovalerate), the penultimate precursor to L-isoleucine and L-valine, respectively. The sequence is that of Dihydroxy-acid dehydratase from Clavibacter michiganensis subsp. michiganensis (strain NCPPB 382).